A 442-amino-acid polypeptide reads, in one-letter code: tRNA-2-methylthio-N(6)-dimethylallyladenosine synthase (442 aa).

Residues 2 to 120 (KKVFIRTFGC…LPKMIVDKET (119 aa)) enclose the MTTase N-terminal domain. [4Fe-4S] cluster is bound by residues cysteine 11, cysteine 49, cysteine 83, cysteine 157, cysteine 161, and cysteine 164. Residues 143–375 (RVEGGAAFVS…NEVIEAETAR (233 aa)) enclose the Radical SAM core domain. In terms of domain architecture, TRAM spans 378 to 441 (QTMIGTVQRC…TFSLRGKVVE (64 aa)).

It belongs to the methylthiotransferase family. MiaB subfamily. Monomer. [4Fe-4S] cluster is required as a cofactor.

It localises to the cytoplasm. It carries out the reaction N(6)-dimethylallyladenosine(37) in tRNA + (sulfur carrier)-SH + AH2 + 2 S-adenosyl-L-methionine = 2-methylsulfanyl-N(6)-dimethylallyladenosine(37) in tRNA + (sulfur carrier)-H + 5'-deoxyadenosine + L-methionine + A + S-adenosyl-L-homocysteine + 2 H(+). Functionally, catalyzes the methylthiolation of N6-(dimethylallyl)adenosine (i(6)A), leading to the formation of 2-methylthio-N6-(dimethylallyl)adenosine (ms(2)i(6)A) at position 37 in tRNAs that read codons beginning with uridine. The chain is tRNA-2-methylthio-N(6)-dimethylallyladenosine synthase from Neisseria meningitidis serogroup C / serotype 2a (strain ATCC 700532 / DSM 15464 / FAM18).